Consider the following 121-residue polypeptide: MEKSYVKFETPEDVSQKALDLVESAFRSGKIKKGTNEVIKSIERGESKLVVIAEDVNPPEVVYYLPSLCEDKKVPYVYVKKKADLGSKVGIASAASVSIVDYGKNEELYKSIVSAVEQLKK.

It belongs to the eukaryotic ribosomal protein eL8 family. As to quaternary structure, part of the 50S ribosomal subunit. Probably part of the RNase P complex.

Its subcellular location is the cytoplasm. In terms of biological role, multifunctional RNA-binding protein that recognizes the K-turn motif in ribosomal RNA, the RNA component of RNase P, box H/ACA, box C/D and box C'/D' sRNAs. This chain is Large ribosomal subunit protein eL8, found in Thermoplasma volcanium (strain ATCC 51530 / DSM 4299 / JCM 9571 / NBRC 15438 / GSS1).